A 1128-amino-acid chain; its full sequence is Major DNA-binding protein (1128 aa).

Residues 453 to 466 fold into a zinc finger; the sequence is CELCQGTCPASCIH. A required for nuclear localization region spans residues 1098-1128; the sequence is QIEEFAPQATLSTLAASRKRKITSILSDIDL.

It belongs to the herpesviridae major DNA-binding protein family. As to quaternary structure, homooligomers. Forms double-helical filaments necessary for the formation of replication compartments within the host nucleus. Interacts with the origin-binding protein. Interacts with the helicase primase complex; this interaction stimulates primer synthesis activity of the helicase-primase complex. Interacts with the DNA polymerase. Interacts with the alkaline exonuclease; this interaction increases its nuclease processivity.

It is found in the host nucleus. In terms of biological role, single-stranded DNA-binding protein required for DNA replication. Functionally, plays several crucial roles in viral infection. Participates in the opening of the viral DNA origin to initiate replication by interacting with the origin-binding protein. May disrupt loops, hairpins and other secondary structures present on ssDNA to reduce and eliminate pausing of viral DNA polymerase at specific sites during elongation. Promotes viral DNA recombination by performing strand-transfer, characterized by the ability to transfer a DNA strand from a linear duplex to a complementary single-stranded DNA circle. Can also catalyze the renaturation of complementary single strands. Additionally, reorganizes the host cell nucleus, leading to the formation of prereplicative sites and replication compartments. This process is driven by the protein which can form double-helical filaments in the absence of DNA. This Saimiri sciureus (Common squirrel monkey) protein is Major DNA-binding protein.